The sequence spans 299 residues: Cytidine deaminase (299 aa).

CMP/dCMP-type deaminase domains are found at residues 56–176 and 194–299; these read SKIE…FGPK and LQGD…YIAV. Residue 97-99 coordinates substrate; the sequence is NQE. Histidine 110 contributes to the Zn(2+) binding site. The active-site Proton donor is glutamate 112. The Zn(2+) site is built by cysteine 137 and cysteine 140.

It belongs to the cytidine and deoxycytidylate deaminase family. Homodimer. It depends on Zn(2+) as a cofactor.

The enzyme catalyses cytidine + H2O + H(+) = uridine + NH4(+). It carries out the reaction 2'-deoxycytidine + H2O + H(+) = 2'-deoxyuridine + NH4(+). Functionally, this enzyme scavenges exogenous and endogenous cytidine and 2'-deoxycytidine for UMP synthesis. This is Cytidine deaminase from Haemophilus ducreyi (strain 35000HP / ATCC 700724).